Here is a 317-residue protein sequence, read N- to C-terminus: GPI-specific phospholipase A2-like PGAP3 (317 aa).

The first 18 residues, 1 to 18 (MAPFLVLFLAGVVSASRG), serve as a signal peptide directing secretion. Residues 19-93 (DREPVYRDCV…QFHGKWPFSR (75 aa)) are Lumenal-facing. N-linked (GlcNAc...) asparagine glycosylation is present at Asn35. The chain crosses the membrane as a helical span at residues 94-114 (FLFFQEPASALASFLNGVASL). The Cytoplasmic portion of the chain corresponds to 115-132 (LMLFRYRSSVPSSCQMYR). Residues 133–153 (TCLAFSMVSVNAWFWSTIFHT) form a helical membrane-spanning segment. Topologically, residues 154 to 163 (RDTALTEKMD) are lumenal. A helical membrane pass occupies residues 164–180 (YFCASSVILHSIYLCCM). Topologically, residues 181–189 (RTFGLQYPS) are cytoplasmic. Residues 190-210 (IANAFGAFLVLLFACHISYLT) traverse the membrane as a helical segment. The Lumenal segment spans residues 211 to 219 (LGRFDYSYN). Residues 220 to 240 (MAANTSFGIVNLMWWLAWCMW) form a helical membrane-spanning segment. Residues 241-251 (RRFHQPYLWKC) lie on the Cytoplasmic side of the membrane. Residues 252-272 (VLVVVLLQSLALLELLDFPPV) traverse the membrane as a helical segment. Residue Met273 is a topological domain, lumenal. A helical transmembrane segment spans residues 274 to 293 (WILDAHALWHFSTIPLHFLF). The Cytoplasmic segment spans residues 294–317 (YSFLRDDSLYLLKVNHDDDIPKLD).

It belongs to the PGAP3 family.

Its subcellular location is the golgi apparatus membrane. Involved in the fatty acid remodeling steps of GPI-anchor maturation where the unsaturated acyl chain at sn-2 of inositol phosphate is replaced by a saturated stearoyl chain. May catalyze the first step of the fatty acid remodeling, by removing the unsaturated acyl chain at sn-2 of inositol phosphate, generating a lyso-GPI intermediate. The fatty acid remodeling steps is critical for the integration of GPI-APs into lipid rafts. The chain is GPI-specific phospholipase A2-like PGAP3 from Xenopus laevis (African clawed frog).